We begin with the raw amino-acid sequence, 101 residues long: Large ribosomal subunit protein uL23 (101 aa).

It belongs to the universal ribosomal protein uL23 family. As to quaternary structure, part of the 50S ribosomal subunit. Contacts protein L29, and trigger factor when it is bound to the ribosome.

Its function is as follows. One of the early assembly proteins it binds 23S rRNA. One of the proteins that surrounds the polypeptide exit tunnel on the outside of the ribosome. Forms the main docking site for trigger factor binding to the ribosome. This chain is Large ribosomal subunit protein uL23, found in Mannheimia succiniciproducens (strain KCTC 0769BP / MBEL55E).